We begin with the raw amino-acid sequence, 645 residues long: Sodium-dependent nutrient amino acid transporter 1 (645 aa).

The interval 1-48 is disordered; it reads MELKTMPHNGANGSPQHNNNNNSNNNNNVSSDTKTDNNEKEAQKKDEG. Residues 1 to 51 are Cytoplasmic-facing; it reads MELKTMPHNGANGSPQHNNNNNSNNNNNVSSDTKTDNNEKEAQKKDEGRTN. The span at 18-32 shows a compositional bias: low complexity; sequence NNNNNSNNNNNVSSD. Positions 33–48 are enriched in basic and acidic residues; sequence TKTDNNEKEAQKKDEG. Helical transmembrane passes span 52-72, 85-105, and 138-158; these read WSNGIEFLMSCISVSVGLGNV, GAFLIPYIIVLFLIGKPMYYL, and TICIITYYSSLLALTLYYLFV. 2 N-linked (GlcNAc...) asparagine glycosylation sites follow: N191 and N205. The next 7 membrane-spanning stretches (helical) occupy residues 234 to 254, 264 to 284, 313 to 333, 347 to 367, 407 to 427, 454 to 474, and 480 to 500; these read IPDWKLTIALFVSWVVIFLVI, AAYFLALFPYVVLFALLGRAV, AVVQCFFSLAVGCGPIIMFAS, IVTTLDTLTSLLGGITIFAIL, LFSVLFFFMLFVLGIGSIVAL, CGFLMGLVYVTPGGQWILTLV, and TYVVFILAIFELSGIVWIYGL. N-linked (GlcNAc...) asparagine glycosylation occurs at N514. Transmembrane regions (helical) follow at residues 522–542 and 559–579; these read CWSFFTPVMMIVIFIYSMATI and AGWLLFAVGAAQFPLWGWWYI.

The protein belongs to the sodium:neurotransmitter symporter (SNF) (TC 2.A.22) family.

It localises to the membrane. Unusual broad substrate spectrum amino acid:sodium cotransporter that promotes absorption of the D isomers of essential amino acids. Neutral amino acids are the preferred substrates, especially methionine and phenylalanine. In Drosophila mojavensis (Fruit fly), this protein is Sodium-dependent nutrient amino acid transporter 1.